Here is a 318-residue protein sequence, read N- to C-terminus: Ferredoxin--NADP reductase (318 aa).

FAD-binding residues include Asp33, Gln41, Tyr46, Val84, Phe115, Asp276, and Thr316.

This sequence belongs to the ferredoxin--NADP reductase type 2 family. As to quaternary structure, homodimer. FAD serves as cofactor.

It catalyses the reaction 2 reduced [2Fe-2S]-[ferredoxin] + NADP(+) + H(+) = 2 oxidized [2Fe-2S]-[ferredoxin] + NADPH. This is Ferredoxin--NADP reductase from Lactobacillus johnsonii (strain CNCM I-12250 / La1 / NCC 533).